The sequence spans 349 residues: Cbb3-type cytochrome c oxidase subunit CcoP (349 aa).

The disordered stretch occupies residues 1-67; sequence MADTDDEHAS…RVVRDRKGGR (67 aa). Topologically, residues 1–96 are cytoplasmic; the sequence is MADTDDEHAS…NPLPRWWLWT (96 aa). Over residues 16 to 30 the composition is skewed to basic and acidic residues; it reads NRIELERQAADEAHK. The helical transmembrane segment at 97–117 threads the bilayer; sequence FYATIVWGVLYLIAYPAIPLV. The Periplasmic portion of the chain corresponds to 118-349; that stretch reads NGATQGLLGQ…AYVHSLGGGE (232 aa). 2 Cytochrome c domains span residues 168 to 258 and 265 to 346; these read YTAN…LELG and ALAA…HSLG. Heme c-binding residues include C181, C184, H185, M233, C278, C281, H282, and M323.

The protein belongs to the CcoP / FixP family. In terms of assembly, component of the cbb3-type cytochrome c oxidase at least composed of CcoN, CcoO, CcoQ and CcoP. Requires heme c as cofactor.

Its subcellular location is the cell inner membrane. The protein operates within energy metabolism; oxidative phosphorylation. Its function is as follows. C-type cytochrome. Part of the cbb3-type cytochrome c oxidase complex. CcoP subunit is required for transferring electrons from donor cytochrome c via its heme groups to CcoO subunit. From there, electrons are shuttled to the catalytic binuclear center of CcoN subunit where oxygen reduction takes place. The complex also functions as a proton pump. The chain is Cbb3-type cytochrome c oxidase subunit CcoP from Paracoccus denitrificans (strain Pd 1222).